Consider the following 170-residue polypeptide: Non-classical export protein 102 (170 aa).

At 1-11 (MLAIGDVILRA) the chain is on the cytoplasmic side. Positions 6-141 (DVILRAFNFV…TFIFIASAIF (136 aa)) constitute an MARVEL domain. The chain crosses the membrane as a helical span at residues 12–32 (FNFVFLVIALGLTGSLAATTI). Residues 33-38 (TQHNPQ) lie on the Extracellular side of the membrane. Residues 39–61 (INFAVFAAAFGLLTSSFYGVFAY) form a helical membrane-spanning segment. At 62–76 (FVAAFAWPVILFVFD) the chain is on the cytoplasmic side. The chain crosses the membrane as a helical span at residues 77-97 (FLNFVFTFAAATAIAAGIRAH). At 98-125 (SCSNQDYLDDNNIAQGSSGRCRKAQAST) the chain is on the extracellular side. A helical transmembrane segment spans residues 126-146 (AFLYFSTFIFIASAIFSAISL). At 147–170 (SKGGLFGHSSRPAPRTGVPTMSQV) the chain is on the cytoplasmic side.

This sequence belongs to the NCE102 family.

It localises to the cell membrane. Its function is as follows. Involved in membrane organization. Involved in a novel pathway of export of proteins that lack a cleavable signal sequence. Non-classical export pathway also functions as an alternative clearance/detoxification pathway to eliminate damaged material, when the basic repair pathway is not sufficient. Regulates actin organization and subsequent morphogenesis and pathogenesis. The sequence is that of Non-classical export protein 102 from Candida albicans (strain SC5314 / ATCC MYA-2876) (Yeast).